The chain runs to 791 residues: MPKENKHARGRRDTLKRKREENLDREEDHDNDSQDLKKRRSSQIEDEASFRALDNDQTLSSFPAATGTNAIEVADRPYYGLLEDEEQEYFRRADELLELNDFPSDEERSLFLANVYREAKGKELKIACSQSCSRLMERLILLSTPQQKKKLFSQFAGNFPHLVSHRFASHCCETLFIQSASIVTEELTGEEKKEEKKVADVKADAEDGEEGKEDEITESMESLFLATLDELEGQLSSLLTDRFASHTLRVLLIILSGRPLEKSSTKSLLQSKKKEKVGINGLDTAPTEFSLNKRTVPESFLWAIEKIISDTIASMDRAFIQVLVGHPTGNPCLQLLLELELTNPSSKKGGNSEQKTLISTLLPDDITVEGSQSAIFVNGIVYDQIGSRVLETIMTHSPGKLFKQIYRAIFKDRIAGLARNEIASYVVIRVLNRLSKEDLEEAITEISPQIEGLVGRQRTNIIKVLLERCQVRRASTEALTKSIADAYGSDKNELILKMADISLETLTLATAPPPAADDDKPAPVAVLPKPSPSQLHGSLLAQAMLKIPGPPAQLIQSSLLALPTSTILALSLYPTTTHIIQASLLPSPPNTPSNLLFRRKLINSIISPPAGATSTPQPPIITLSLSSAGTHILDSLLHTTTTPTSTSSASLFSLCERIAMSLMPYEPLLRDSWTGRIVWRNWSMDLFKRRRADWVKRVKSGDTQGKSNIQSQVVLKSQDGNANAVVGKEILGDGIGKPHGKGKGGEKEIGGERQKSAIELAREKFAAQKLASGKLKTIPLKGFKATGANAI.

Basic and acidic residues predominate over residues 1 to 36; sequence MPKENKHARGRRDTLKRKREENLDREEDHDNDSQDL. The segment at 1 to 52 is disordered; that stretch reads MPKENKHARGRRDTLKRKREENLDREEDHDNDSQDLKKRRSSQIEDEASFRA. 2 Pumilio repeats span residues 118-153 and 154-189; these read EAKGKELKIACSQSCSRLMERLILLSTPQQKKKLFS and QFAGNFPHLVSHRFASHCCETLFIQSASIVTEELTG. Basic and acidic residues predominate over residues 193-205; the sequence is KEEKKVADVKADA. A disordered region spans residues 193-213; it reads KEEKKVADVKADAEDGEEGKE. Pumilio repeat units follow at residues 230–270, 372–407, 408–445, and 614–653; these read ELEG…SLLQ, QSAIFVNGIVYDQIGSRVLETIMTHSPGKLFKQIYR, AIFKDRIAGLARNEIASYVVIRVLNRLSKEDLEEAITE, and STPQPPIITLSLSSAGTHILDSLLHTTTTPTSTSSASLFS.

It belongs to the NOP9 family.

It localises to the nucleus. The protein resides in the nucleolus. Functionally, RNA-binding nucleolar protein required for pre-rRNA processing. Involved in production of 18S rRNA and assembly of small ribosomal subunit. The chain is Nucleolar protein 9 (NOP9) from Botryotinia fuckeliana (strain B05.10) (Noble rot fungus).